Reading from the N-terminus, the 611-residue chain is Broad-specificity linear acyl-CoA dehydrogenase FadE5 (611 aa).

Residues 162–165 (MVLT), serine 171, and threonine 198 each bind FAD. A 2,3-saturated acyl-CoA is bound at residue serine 171. Residues 224–225 (TK) and arginine 301 contribute to the a 2,3-saturated acyl-CoA site. Arginine 326 lines the FAD pocket. Lysine 338 is an a 2,3-saturated acyl-CoA binding site. Residue 420–424 (QTLGG) participates in FAD binding. Glutamate 447 contacts a 2,3-saturated acyl-CoA. The active-site Proton acceptor is glutamate 447. Residue threonine 449 coordinates FAD. Residues aspartate 456 and 460–461 (RK) contribute to the a 2,3-saturated acyl-CoA site.

This sequence belongs to the acyl-CoA dehydrogenase family. In terms of assembly, homodimer. It depends on FAD as a cofactor.

It catalyses the reaction a long-chain 2,3-saturated fatty acyl-CoA + oxidized [electron-transfer flavoprotein] + H(+) = a long-chain (2E)-enoyl-CoA + reduced [electron-transfer flavoprotein]. It carries out the reaction a medium-chain 2,3-saturated fatty acyl-CoA + oxidized [electron-transfer flavoprotein] + H(+) = a medium-chain (2E)-enoyl-CoA + reduced [electron-transfer flavoprotein]. The catalysed reaction is a short-chain 2,3-saturated fatty acyl-CoA + oxidized [electron-transfer flavoprotein] + H(+) = a short-chain (2E)-enoyl-CoA + reduced [electron-transfer flavoprotein]. The enzyme catalyses octadecanoyl-CoA + oxidized [electron-transfer flavoprotein] + H(+) = (2E)-octadecenoyl-CoA + reduced [electron-transfer flavoprotein]. It catalyses the reaction oxidized [electron-transfer flavoprotein] + hexadecanoyl-CoA + H(+) = (2E)-hexadecenoyl-CoA + reduced [electron-transfer flavoprotein]. It carries out the reaction dodecanoyl-CoA + oxidized [electron-transfer flavoprotein] + H(+) = (2E)-dodecenoyl-CoA + reduced [electron-transfer flavoprotein]. The catalysed reaction is decanoyl-CoA + oxidized [electron-transfer flavoprotein] + H(+) = (2E)-decenoyl-CoA + reduced [electron-transfer flavoprotein]. The enzyme catalyses hexanoyl-CoA + oxidized [electron-transfer flavoprotein] + H(+) = (2E)-hexenoyl-CoA + reduced [electron-transfer flavoprotein]. It catalyses the reaction butanoyl-CoA + oxidized [electron-transfer flavoprotein] + H(+) = (2E)-butenoyl-CoA + reduced [electron-transfer flavoprotein]. Its pathway is lipid metabolism; fatty acid metabolism. In terms of biological role, acyl-CoA dehydrogenase that exhibits broad specificity for linear acyl-CoA substrates, with a preference for long-chain substrates. This Mycobacterium tuberculosis (strain ATCC 25618 / H37Rv) protein is Broad-specificity linear acyl-CoA dehydrogenase FadE5.